The primary structure comprises 352 residues: Molybdenum import ATP-binding protein ModC (352 aa).

The region spanning 1–229 is the ABC transporter domain; sequence MLQLDFHQQL…SALRPWLPKD (229 aa). ATP is bound at residue 31 to 38; that stretch reads GVSGAGKT. One can recognise a Mop domain in the interval 289–352; it reads KSSIRNVLRA…AQIKSVSITA (64 aa).

The protein belongs to the ABC transporter superfamily. Molybdate importer (TC 3.A.1.8) family. In terms of assembly, the complex is composed of two ATP-binding proteins (ModC), two transmembrane proteins (ModB) and a solute-binding protein (ModA).

Its subcellular location is the cell inner membrane. The enzyme catalyses molybdate(out) + ATP + H2O = molybdate(in) + ADP + phosphate + H(+). Functionally, part of the ABC transporter complex ModABC involved in molybdenum import. Responsible for energy coupling to the transport system. The sequence is that of Molybdenum import ATP-binding protein ModC from Pectobacterium atrosepticum (strain SCRI 1043 / ATCC BAA-672) (Erwinia carotovora subsp. atroseptica).